The primary structure comprises 330 residues: 6-methylsalicylic acid decarboxylase acuB (330 aa).

Zn(2+) contacts are provided by His6, His8, His156, and Asp276.

This sequence belongs to the metallo-dependent hydrolases superfamily. ACMSD family. As to quaternary structure, monomer.

The protein localises to the cytoplasm. It is found in the cytosol. It catalyses the reaction 6-methylsalicylate + H(+) = 3-methylphenol + CO2. Its pathway is secondary metabolite biosynthesis. In terms of biological role, 6-methylsalicylic acid decarboxylase; part of the gene cluster that mediates the biosynthesis of aculins. The pathway begins with the synthesis of 6-methylsalicylic acid by the polyketide synthase (PKS) acuA via condensation of acetate and malonate units. The 6-methylsalicylic acid decarboxylase acuB then catalyzes the decarboxylation of 6-methylsalicylic acid to yield m-cresol (also known as 3-methylphenol). These first reactions occur in the cytosol. The intermediate m-cresol is then transported into the endoplasmic reticulum where the cytochrome P450 monooxygenase acuC converts it to m-hydroxybenzyl alcohol, which is further converted to gentisyl alcohol by the cytochrome P450 monooxygenase acuD. Gentisyl alcohol is further oxidized by the oxidoreductase acuE that probably catalyzes hydroxylation of the aromatic ring. The aromatic system might then be opened by oxidation through a Baeyer-Villiger type of oxidation, which could be catalyzed by acuF, with the carboxylic acid at C-1 subsequently reduced to an aldehyde by acuG. Subsequently, a hemiacetal is formed, before the dehydrogenase acuH would reduce the double bond between C-4 and C-6. Finally, keto-enol tautomerism results in formation of aculinic acid, which exists as two diastereomers (both R/S configurations at C-1) by non-enzymatic hemiacetal formation. The carboxypeptidase acuI could be involved in the linking of aculinic acid to an aculene A moiety produced by the aculene biosynthesis cluster and which leads to the production of aculin A. AcuI may also be involved in the attachment of proline to aculinic acid to form epi-aculins A and B. This Aspergillus aculeatus (strain ATCC 16872 / CBS 172.66 / WB 5094) protein is 6-methylsalicylic acid decarboxylase acuB.